The sequence spans 135 residues: Mediator of RNA polymerase II transcription subunit 10 (135 aa).

This sequence belongs to the Mediator complex subunit 10 family. Component of the Mediator complex.

The protein resides in the nucleus. In terms of biological role, component of the Mediator complex, a coactivator involved in the regulated transcription of nearly all RNA polymerase II-dependent genes. Mediator functions as a bridge to convey information from gene-specific regulatory proteins to the basal RNA polymerase II transcription machinery. Mediator is recruited to promoters by direct interactions with regulatory proteins and serves as a scaffold for the assembly of a functional preinitiation complex with RNA polymerase II and the general transcription factors. The chain is Mediator of RNA polymerase II transcription subunit 10 (med10) from Xenopus tropicalis (Western clawed frog).